A 326-amino-acid polypeptide reads, in one-letter code: Centriolar satellite-associated tubulin polyglutamylase complex regulator 1 (326 aa).

Positions 1 to 111 (MLSPERLALP…HCLLQLLCPD (111 aa)) are required for interaction with PCM1. Residues 1–225 (MLSPERLALP…SCPPPALVKE (225 aa)) are required for interaction with TPGS1, LRRC49, and TTLL1.

This sequence belongs to the CSTPP1 family. In terms of assembly, interacts with PCM1. Interacts with TTLL1, TPGS1, TPGS2 and LRRC49; the interactions link CSTPP1 to the complex TPGC. Binds to alpha-tubulin.

It localises to the cytoplasm. The protein localises to the cytoskeleton. The protein resides in the microtubule organizing center. Its subcellular location is the centrosome. It is found in the centriolar satellite. Its function is as follows. Regulator of the tubulin polyglutamylase complex (TPGC) that controls cytoskeletal organization, nuclear shape, and cilium disassembly by balancing microtubule and actin assembly. Regulates the assembly and stability of the TPGC and thereby modulates polyglutamylation of the microtubule, which antagonizes MAP4 binding. The chain is Centriolar satellite-associated tubulin polyglutamylase complex regulator 1 (CSTPP1) from Bos taurus (Bovine).